The chain runs to 220 residues: UPF0441 protein Spro_4274 (220 aa).

Residues Met181 to Gly220 are disordered. Over residues Gln203–Gly220 the composition is skewed to low complexity.

This sequence belongs to the UPF0441 family.

The chain is UPF0441 protein Spro_4274 from Serratia proteamaculans (strain 568).